The sequence spans 464 residues: Juvenile hormone epoxide hydrolase 1 (464 aa).

The helical transmembrane segment at 7–27 (MLIFAAIAGIAVLYYQITKEL) threads the bilayer. Residue Asp224 is the Nucleophile of the active site. Tyr370 (proton donor) is an active-site residue. The Proton acceptor role is filled by His427.

Belongs to the peptidase S33 family. Developing oocytes, fat body and midgut epithelium of adults.

It is found in the microsome membrane. It localises to the endoplasmic reticulum membrane. It carries out the reaction cis-stilbene oxide + H2O = (1R,2R)-hydrobenzoin. The catalysed reaction is 1-(4-methoxyphenyl)-N-methyl-N-[(3-methyloxetan-3-yl)methyl]methanamine + H2O = 2-{[(4-methoxybenzyl)(methyl)amino]methyl}-2-methylpropane-1,3-diol. Functionally, catalyzes juvenile hormone hydrolysis. The sequence is that of Juvenile hormone epoxide hydrolase 1 from Ctenocephalides felis (Cat flea).